Reading from the N-terminus, the 142-residue chain is MPVERTFVMIKPDGVKRGLVGEIIARFERKGLKIKALKMKWLTREEAEKLYEVHRGKPFFEDLVNFVTSGPVVAMILEGDSAIEVVRLMIGPTDGRKAPPGTIRGDYALDIGANVIHASDSKESYEREYKVFFSDDEIVGDY.

Positions 11, 59, 87, 93, 104, and 114 each coordinate ATP. The active-site Pros-phosphohistidine intermediate is the H117.

This sequence belongs to the NDK family. Mg(2+) serves as cofactor.

It is found in the cytoplasm. The catalysed reaction is a 2'-deoxyribonucleoside 5'-diphosphate + ATP = a 2'-deoxyribonucleoside 5'-triphosphate + ADP. The enzyme catalyses a ribonucleoside 5'-diphosphate + ATP = a ribonucleoside 5'-triphosphate + ADP. In terms of biological role, major role in the synthesis of nucleoside triphosphates other than ATP. The ATP gamma phosphate is transferred to the NDP beta phosphate via a ping-pong mechanism, using a phosphorylated active-site intermediate. The sequence is that of Nucleoside diphosphate kinase from Hyperthermus butylicus (strain DSM 5456 / JCM 9403 / PLM1-5).